Reading from the N-terminus, the 52-residue chain is Stable plasmid inheritance protein (52 aa).

The chain crosses the membrane as a helical span at residues 6–26; that stretch reads SSLVWCVLIVCLTLLIFTYLT.

The protein belongs to the Hok/Gef family.

Its subcellular location is the cell inner membrane. Toxic component of a type I toxin-antitoxin (TA) system. Part of the plasmid maintenance system, encodes a toxic protein that collapses the transmembrane potential and arrests respiration. When the adjacent non-translated flmB (sok) gene is disrupted FlmA no longer functions in plasmid maintenance (i.e. FlmB probably encodes an antisense antitoxin RNA). Translation of FlmA may be coupled to the upstream flmC gene. This chain is Stable plasmid inheritance protein (flmA), found in Escherichia coli O157:H7.